The sequence spans 258 residues: Snake venom serine protease PTLE1 (258 aa).

A signal peptide spans 1-18 (MVLIRVLANLLILQLSYA). Positions 19–24 (QKSSEL) are excised as a propeptide. Residues 25-249 (VIGGDECNIN…YTDWIENIIA (225 aa)) form the Peptidase S1 domain. Disulfide bonds link C31-C163, C50-C66, C98-C256, C142-C210, C174-C189, and C200-C225. A glycan (N-linked (GlcNAc...) asparagine) is linked at N44. The Charge relay system role is filled by H65. N-linked (GlcNAc...) asparagine glycosylation is found at N79 and N103. D110 acts as the Charge relay system in catalysis. An N-linked (GlcNAc...) asparagine glycan is attached at N121. S204 functions as the Charge relay system in the catalytic mechanism.

Belongs to the peptidase S1 family. Snake venom subfamily. In terms of assembly, monomer. As to expression, expressed by the venom gland.

It is found in the secreted. In terms of biological role, snake venom serine protease that may act in the hemostasis system of the prey. The polypeptide is Snake venom serine protease PTLE1 (Gloydius halys (Chinese water mocassin)).